The sequence spans 146 residues: MKLRIATIAGLVVLGSGFAVAQTDVIAQRKAILKQMGEATKPIAAMLKGEAKFDQAVVQKSLAAIADDSKKLPALFPADSKTGGDTAALPKIWEDKAKFDDLFAKLAAAATAAQGTIKDEASLKANIGGVLGNCKSCHDDFRAKKS.

The N-terminal stretch at 1 to 21 is a signal peptide; sequence MKLRIATIAGLVVLGSGFAVA. Residues arginine 29, threonine 86, alanine 87, cysteine 134, cysteine 137, and histidine 138 each contribute to the heme c site.

In terms of assembly, monomer. Post-translationally, binds 1 heme c group covalently per subunit.

Cytochrome c' is the most widely occurring bacterial c-type cytochrome. Cytochromes c' are high-spin proteins and the heme has no sixth ligand. Their exact function is not known. The chain is Cytochrome c' (cycA) from Rhodopseudomonas palustris (strain ATCC BAA-98 / CGA009).